A 163-amino-acid polypeptide reads, in one-letter code: Extracellular giant hemoglobin major globin subunit B2 (163 aa).

The N-terminal stretch at 1–16 (MIALFVLMGLMAAASA) is a signal peptide. One can recognise a Globin domain in the interval 19-163 (CCSSEDRANV…RIANGISAGL (145 aa)). An intrachain disulfide couples Cys20 to Cys151. Cys83 contributes to the hydrogen sulfide binding site. His114 is a binding site for heme b.

This sequence belongs to the globin family. As to quaternary structure, the 400 kDa hemoglobin consists of a spherical 24-mer arranged as a double layer of dome-shaped dodecamers. Each dodecamer is composed of the 3-fold trimer of the tetramer A1-A2-B1-B2 having one intra-tetramer (A1-B2) disulfide bond and one inter-tetramer (B1-B2) disulfide bond per tetramer.

The protein localises to the secreted. In terms of biological role, the extracellular giant hemoglobin is able to bind and transport oxygen and hydrosulfide simultaneously and reversibly at two different sites. This is Extracellular giant hemoglobin major globin subunit B2 (ghbB2) from Oligobrachia mashikoi (Beard worm).